The primary structure comprises 301 residues: Large ribosomal subunit protein uL18z (301 aa).

It belongs to the universal ribosomal protein uL18 family. As to quaternary structure, component of the large ribosomal subunit (LSU). As to expression, expressed in seedlings, roots, stems, leaves, inflorescences and siliques.

It is found in the cytoplasm. It localises to the nucleus. The protein resides in the nucleolus. The protein localises to the nucleoplasm. Functionally, component of the ribosome, a large ribonucleoprotein complex responsible for the synthesis of proteins in the cell. The small ribosomal subunit (SSU) binds messenger RNAs (mRNAs) and translates the encoded message by selecting cognate aminoacyl-transfer RNA (tRNA) molecules. The large subunit (LSU) contains the ribosomal catalytic site termed the peptidyl transferase center (PTC), which catalyzes the formation of peptide bonds, thereby polymerizing the amino acids delivered by tRNAs into a polypeptide chain. The nascent polypeptides leave the ribosome through a tunnel in the LSU and interact with protein factors that function in enzymatic processing, targeting, and the membrane insertion of nascent chains at the exit of the ribosomal tunnel. Seems involved in the regulation of cell proliferation. Essential in leaf polarity establishment, probably having a role for translation in leaf dorsoventral patterning to specify leaf adaxial identity. This chain is Large ribosomal subunit protein uL18z, found in Arabidopsis thaliana (Mouse-ear cress).